A 240-amino-acid polypeptide reads, in one-letter code: Uridylate kinase (240 aa).

14-17 (KLSG) contacts ATP. Gly-56 lines the UMP pocket. 2 residues coordinate ATP: Gly-57 and Arg-61. UMP is bound by residues Asp-76 and 137–144 (TGNPFFTT). ATP is bound by residues Thr-164, Tyr-170, and Asp-173.

It belongs to the UMP kinase family. Homohexamer.

The protein resides in the cytoplasm. The catalysed reaction is UMP + ATP = UDP + ADP. Its pathway is pyrimidine metabolism; CTP biosynthesis via de novo pathway; UDP from UMP (UMPK route): step 1/1. Its activity is regulated as follows. Inhibited by UTP. In terms of biological role, catalyzes the reversible phosphorylation of UMP to UDP. The protein is Uridylate kinase of Acidovorax sp. (strain JS42).